Consider the following 525-residue polypeptide: Peptide chain release factor 3 (525 aa).

One can recognise a tr-type G domain in the interval 9 to 276 (AKRRTFAIIS…GFTRYAPAPQ (268 aa)). GTP contacts are provided by residues 18-25 (SHPDAGKT), 86-90 (DTPGH), and 140-143 (NKFD).

This sequence belongs to the TRAFAC class translation factor GTPase superfamily. Classic translation factor GTPase family. PrfC subfamily.

It localises to the cytoplasm. Its function is as follows. Increases the formation of ribosomal termination complexes and stimulates activities of RF-1 and RF-2. It binds guanine nucleotides and has strong preference for UGA stop codons. It may interact directly with the ribosome. The stimulation of RF-1 and RF-2 is significantly reduced by GTP and GDP, but not by GMP. The sequence is that of Peptide chain release factor 3 from Francisella tularensis subsp. holarctica (strain FTNF002-00 / FTA).